A 316-amino-acid chain; its full sequence is Pantothenate kinase (316 aa).

Residue 95–102 (GSVAVGKS) participates in ATP binding.

It belongs to the prokaryotic pantothenate kinase family.

It localises to the cytoplasm. It carries out the reaction (R)-pantothenate + ATP = (R)-4'-phosphopantothenate + ADP + H(+). It functions in the pathway cofactor biosynthesis; coenzyme A biosynthesis; CoA from (R)-pantothenate: step 1/5. The protein is Pantothenate kinase of Shewanella putrefaciens (strain CN-32 / ATCC BAA-453).